A 699-amino-acid polypeptide reads, in one-letter code: Sarcoplasmic reticulum histidine-rich calcium-binding protein (699 aa).

The N-terminal stretch at Met1–Gln28 is a signal peptide. A disordered region spans residues Ser50–Val95. The span at Ala55–Glu89 shows a compositional bias: basic and acidic residues. Phosphothreonine; by FAM20C is present on Thr76. Repeat copies occupy residues His106–Glu121, His134–Ser154, His155–Ile177, His180–Ala213, His214–Ser237, His238–Ala270, His271–Ser294, His295–Ala318, His319–Asp342, and His343–Gly365. Positions His106 to Asp342 are 6 X approximate tandem repeats. A 4 X tandem repeats, acidic region spans residues His106–Gly365. 2 positions are modified to phosphoserine; by FAM20C: Ser119 and Ser145. Residues His127–Glu617 are disordered. Basic residues-rich tracts occupy residues His148–His158 and His173–Arg183. Acidic residues predominate over residues Gly187–Ser206. The span at His231–Gln241 shows a compositional bias: basic residues. Positions Glu244–Ser263 are enriched in acidic residues. A compositionally biased stretch (basic residues) spans His288–Arg298. A compositionally biased stretch (acidic residues) spans Glu302–Ser311. Positions His324–Glu335 are enriched in basic and acidic residues. Ser333 carries the phosphoserine modification. A compositionally biased stretch (basic residues) spans His336–Gly347. A phosphoserine; by FAM20C mark is found at Ser358 and Ser431. Composition is skewed to basic and acidic residues over residues Ser444–His463 and Val470–Asp481. Ser494 carries the post-translational modification Phosphoserine; by FAM20C. Positions Gln504–Asp515 are enriched in basic and acidic residues. Acidic residues-rich tracts occupy residues Gln532–Arg551 and Ser567–Glu581. The residue at position 567 (Ser567) is a Phosphoserine; by FAM20C. Residues Cys627 to Cys673 form a metal-binding region.

The protein belongs to the HRC family.

It is found in the sarcoplasmic reticulum lumen. In terms of biological role, may play a role in the regulation of calcium sequestration or release in the SR of skeletal and cardiac muscle. This chain is Sarcoplasmic reticulum histidine-rich calcium-binding protein (HRC), found in Homo sapiens (Human).